Here is a 132-residue protein sequence, read N- to C-terminus: Small ribosomal subunit protein uS8 (132 aa).

Belongs to the universal ribosomal protein uS8 family. In terms of assembly, part of the 30S ribosomal subunit. Contacts proteins S5 and S12.

Functionally, one of the primary rRNA binding proteins, it binds directly to 16S rRNA central domain where it helps coordinate assembly of the platform of the 30S subunit. The chain is Small ribosomal subunit protein uS8 from Streptococcus pyogenes serotype M1.